The chain runs to 411 residues: AT-hook motif nuclear-localized protein 14 (411 aa).

Disordered stretches follow at residues 1–32 (MDPNESHHHHQQQQLHHLHQQQQQQQQQQRLT), 54–164 (ASTG…LGSV), 289–348 (KDAA…HQAG), and 366–411 (THSR…QIPD). A compositionally biased stretch (basic residues) spans 7–19 (HHHHQQQQLHHLH). The span at 20 to 29 (QQQQQQQQQQ) shows a compositional bias: low complexity. The span at 54–66 (ASTGNAVPSSNNG) shows a compositional bias: polar residues. A Bipartite nuclear localization signal motif is present at residues 105–113 (KRKRGRPRK). Positions 105-117 (KRKRGRPRKYVTP) form a DNA-binding region, a.T hook. Low complexity-rich tracts occupy residues 120–135 (ALAAKKLASSASSSSA) and 144–159 (VTGGTVSTNSGSSKKS). The PPC domain occupies 165–305 (GKTGQCFTPH…GKGDASNSGS (141 aa)). Polar residues predominate over residues 306 to 315 (RLTSPVSSGQ). The span at 374–390 (RGGGNSGHDGRGGGGYD) shows a compositional bias: gly residues.

It is found in the nucleus. Its function is as follows. Transcription factor that specifically binds AT-rich DNA sequences related to the nuclear matrix attachment regions (MARs). The chain is AT-hook motif nuclear-localized protein 14 from Arabidopsis thaliana (Mouse-ear cress).